Here is a 132-residue protein sequence, read N- to C-terminus: Fatty acid-binding protein, adipocyte (132 aa).

The short motif at 22–32 (KELGVGFATRK) is the Nuclear localization signal element. (9Z,12Z)-octadecadienoate-binding residues include Arg-107 and Arg-127.

This sequence belongs to the calycin superfamily. Fatty-acid binding protein (FABP) family. In terms of assembly, monomer.

The protein localises to the cytoplasm. It is found in the nucleus. In terms of biological role, lipid transport protein in adipocytes. Binds both long chain fatty acids and retinoic acid. Delivers long-chain fatty acids and retinoic acid to their cognate receptors in the nucleus. Has the highest binding affinity for linoleic acid and decreasing relative affinity for eicosapentaenoic acid (EPA), alpha-linolenic acid (ALA), docosahexaenoic acid (DHA), oleic acid, palmitic acid and stearic acid, respectively. This is Fatty acid-binding protein, adipocyte from Pygoscelis papua (Gentoo penguin).